A 696-amino-acid chain; its full sequence is DNA topoisomerase 6 subunit B (696 aa).

Positions 1 to 36 (MDDDAGDGAASGGTKRKVTAASSSAAAKGKAAGKGK) are disordered. Over residues 20 to 36 (AASSSAAAKGKAAGKGK) the composition is skewed to low complexity. ATP is bound by residues Asn-88, Asp-187, 208 to 209 (TK), 217 to 224 (GKFGLGAK), and Lys-543.

This sequence belongs to the TOP6B family. Homodimer. Heterotetramer of two TOP6A and two TOP6B subunits. Interacts with SPO11-2 and TOP6A3. In terms of tissue distribution, highly expressed in flowers before pollination. Expressed in roots and shoots.

The protein localises to the nucleus. It carries out the reaction ATP-dependent breakage, passage and rejoining of double-stranded DNA.. Its function is as follows. Component of the DNA topoisomerase VI involved in chromatin organization and progression of endoreduplication cycles. Relaxes both positive and negative superturns and exhibits a strong decatenase activity. The B subunit binds ATP. May be involved in cell proliferation and stress tolerance. The chain is DNA topoisomerase 6 subunit B from Oryza sativa subsp. indica (Rice).